A 173-amino-acid chain; its full sequence is C-type lectin mosGCTL-7 (173 aa).

Positions Met-1–Ala-24 are cleaved as a signal peptide. A C-type lectin domain is found at Asn-51 to Glu-167. Cystine bridges form between Cys-59/Cys-166 and Cys-139/Cys-158. N-linked (GlcNAc...) asparagine glycans are attached at residues Asn-119 and Asn-144.

In terms of assembly, interacts with putative receptor-type tyrosine-protein phosphatase mosPTP-1; the interaction may mediate the recruitment of Japanese encephalitis virus particles in complex with C-type lectin mosGCTL-7 to the cell surface.

The protein localises to the secreted. Functionally, carbohydrate-binding protein. Its function is as follows. (Microbial infection) Facilitates Japanese encephalitis virus infection in mosquitoes. The protein is C-type lectin mosGCTL-7 of Culex quinquefasciatus (Southern house mosquito).